The primary structure comprises 637 residues: Threonine--tRNA ligase (637 aa).

The TGS domain maps to 1-65; sequence MIAIQLPDGS…EADEALSIIT (65 aa). Residues 246–537 are catalytic; that stretch reads DHRKLGRELD…LIEEHAGALP (292 aa). The Zn(2+) site is built by Cys-337, His-388, and His-514.

This sequence belongs to the class-II aminoacyl-tRNA synthetase family. As to quaternary structure, homodimer. It depends on Zn(2+) as a cofactor.

Its subcellular location is the cytoplasm. The enzyme catalyses tRNA(Thr) + L-threonine + ATP = L-threonyl-tRNA(Thr) + AMP + diphosphate + H(+). Functionally, catalyzes the attachment of threonine to tRNA(Thr) in a two-step reaction: L-threonine is first activated by ATP to form Thr-AMP and then transferred to the acceptor end of tRNA(Thr). Also edits incorrectly charged L-seryl-tRNA(Thr). In Leptothrix cholodnii (strain ATCC 51168 / LMG 8142 / SP-6) (Leptothrix discophora (strain SP-6)), this protein is Threonine--tRNA ligase.